A 323-amino-acid polypeptide reads, in one-letter code: Sporulation-delaying protein SdpB (323 aa).

The next 6 membrane-spanning stretches (helical) occupy residues Leu-27–Ala-49, Ser-70–Arg-92, Leu-112–Leu-134, Thr-155–Leu-177, Ile-219–Ile-241, and Leu-248–Ile-270.

It localises to the cell membrane. In terms of biological role, required for the maturation of SdpC to SDP. Not required for SdpC signal peptide cleavage, secretion from the cell or disulfide bond formation. The protein is Sporulation-delaying protein SdpB of Bacillus subtilis (strain 168).